Reading from the N-terminus, the 699-residue chain is Elongation factor G (699 aa).

Residues 8 to 283 (EHIRNIGICA…AVVDFLPSPI (276 aa)) form the tr-type G domain. Residues 17 to 24 (AHIDAGKT), 81 to 85 (DTPGH), and 135 to 138 (NKMD) contribute to the GTP site.

Belongs to the TRAFAC class translation factor GTPase superfamily. Classic translation factor GTPase family. EF-G/EF-2 subfamily.

Its subcellular location is the cytoplasm. Catalyzes the GTP-dependent ribosomal translocation step during translation elongation. During this step, the ribosome changes from the pre-translocational (PRE) to the post-translocational (POST) state as the newly formed A-site-bound peptidyl-tRNA and P-site-bound deacylated tRNA move to the P and E sites, respectively. Catalyzes the coordinated movement of the two tRNA molecules, the mRNA and conformational changes in the ribosome. The polypeptide is Elongation factor G (Rickettsia rickettsii).